The primary structure comprises 363 residues: Palmitoyltransferase ZDHHC9 (363 aa).

Residues 1–35 (MSVMVVRKKVTRKWEKLPGRNTFCCDGRVMMARQK) lie on the Cytoplasmic side of the membrane. A helical membrane pass occupies residues 36–56 (GIFYLTLFLILGTCTLFFAFE). Over 57–63 (CRYLAVQ) the chain is Lumenal. A helical membrane pass occupies residues 64–84 (LSPAIPVFAAMLFLFSMATLL). At 85-183 (RTSFSDPGVI…NCVGKRNYRY (99 aa)) the chain is on the cytoplasmic side. The DHHC domain maps to 139 to 189 (KYCYTCKIFRPPRASHCSICDNCVERFDHHCPWVGNCVGKRNYRYFYLFIL). C169 (S-palmitoyl cysteine intermediate) is an active-site residue. The helical transmembrane segment at 184–204 (FYLFILSLSLLTIYVFAFNIV) threads the bilayer. Topologically, residues 205 to 228 (YVALKSLKIGFLETLKETPGTVLE) are lumenal. Residues 229–249 (VLICFFTLWSVVGLTGFHTFL) form a helical membrane-spanning segment. At 250-363 (VALNQTTNED…PPQEVTEAEK (114 aa)) the chain is on the cytoplasmic side. The disordered stretch occupies residues 303–363 (PLEESGSRPP…PPQEVTEAEK (61 aa)). Residues 310–322 (RPPSTQEASTSLL) show a composition bias toward polar residues. Pro residues predominate over residues 345–355 (EMPPPEPPEPP).

Belongs to the DHHC palmitoyltransferase family. ERF2/ZDHHC9 subfamily. In terms of assembly, interacts with GOLGA7.

It localises to the endoplasmic reticulum membrane. The protein localises to the golgi apparatus membrane. It carries out the reaction L-cysteinyl-[protein] + hexadecanoyl-CoA = S-hexadecanoyl-L-cysteinyl-[protein] + CoA. Its function is as follows. Palmitoyltransferase that catalyzes the addition of palmitate onto various protein substrates, such as ADRB2, GSDMD, HRAS, NRAS and CGAS. The ZDHHC9-GOLGA7 complex is a palmitoyltransferase specific for HRAS and NRAS. May have a palmitoyltransferase activity toward the beta-2 adrenergic receptor/ADRB2 and therefore regulate G protein-coupled receptor signaling. Acts as a regulator of innate immunity by catalyzing palmitoylation of CGAS, thereby promoting CGAS homodimerization and cyclic GMP-AMP synthase activity. Activates pyroptosis by catalyzing palmitoylation of gasdermin-D (GSDMD), thereby promoting membrane translocation and pore formation of GSDMD. In Bos taurus (Bovine), this protein is Palmitoyltransferase ZDHHC9 (ZDHHC9).